The following is a 320-amino-acid chain: MEKWENQDKILLDKNKRGKDRNWRGRKLLSLKLADIFKELGYRETLIERVETCGDTLRFIRREDGSLRLYQAYFCKNKLCPMCNWRRSMKYSYQTSQIVDEAIKEQPKGRFLFLTLTVKNVPGKELNATISQLTQSFDRLFRRAKVKKNLIGFLRSVEVTHNQEEETYHPHIHVLMMVKSSYFSGAGDNYVSQEEWGRMWEQSLKVDYVPMVDIRSVKEIGKGLKGAILETAKYPIKPIKLDVENKQVVGDLYNGLYRKRQLGYGGLFKEIRKRLQLSNVENGDLVYTSDDNDEMSKGTKIVAIWNATKQNYFVKNKGWN.

The protein belongs to the Gram-positive plasmids replication protein type 1 family.

Its function is as follows. Produces a single-strand nick in a specific site of the plasmid, and this nick results in single-strand replication by rolling circle mechanism. The protein is Protein rep (rep) of Streptococcus pneumoniae serotype 2 (strain D39 / NCTC 7466).